Here is a 181-residue protein sequence, read N- to C-terminus: SAGA-associated factor 11 (181 aa).

Residues 93-114 (FNCMNCGRQIVAGRFAPHLEKC) form an SGF11-type zinc finger. A compositionally biased stretch (basic residues) spans 116 to 125 (GKGRKARAKT). Positions 116 to 181 (GKGRKARAKT…FTVRENVKGD (66 aa)) are disordered. Positions 126 to 153 (TRSTTAAQNRNARRSPNPRYSPYPNSAS) are enriched in low complexity.

It belongs to the SGF11 family. In terms of assembly, component of a deubiquitination module (DUB module) formed by ENY2, SGF11, and UBP22 in Arabidopsis. Interacts directly with ENY2 and UBP22. Interacts with DDA1. In terms of processing, ubiquitinated in DET1-dependent manner. Ubiquitination probably leads to its subsequent proteasomal degradation.

The protein resides in the nucleus. Its subcellular location is the nucleoplasm. In terms of biological role, component of a deubiquitination module (DUB module) that specifically deubiquinates monoubiquinated histone H2B (H2Bub). Does not seem to be a component of the TREX-2 complex. Seems to act independently of the SAGA multiprotein complex. The DUB module is responsible for the major H2Bub deubiquitinase activity in Arabidopsis. The protein is SAGA-associated factor 11 of Arabidopsis thaliana (Mouse-ear cress).